The following is a 48-amino-acid chain: Light-harvesting protein B-870 beta chain (48 aa).

The Cytoplasmic portion of the chain corresponds to 2–21 (AERKGSISGLTDDEAQEFHK). A bacteriochlorophyll is bound by residues histidine 20 and histidine 38. A helical membrane pass occupies residues 22–44 (FWVQGFVGFTAVAVVAHFLVWVW). Residues 45 to 48 (RPWL) are Periplasmic-facing.

In terms of assembly, an alpha/beta heterodimer. The core complex is formed by different alpha and beta chains, binding bacteriochlorophyll molecules, and arranged most probably in tetrameric structures disposed around the reaction center. The non-pigmented gamma chains may constitute additional components.

It is found in the cell inner membrane. Its function is as follows. Antenna complexes are light-harvesting systems, which transfer the excitation energy to the reaction centers. The protein is Light-harvesting protein B-870 beta chain (pufB) of Rubrivivax gelatinosus (Rhodocyclus gelatinosus).